A 360-amino-acid polypeptide reads, in one-letter code: D-alanine--D-alanine ligase (360 aa).

An ATP-grasp domain is found at 149–353 (KKLMAAEGLP…YEELLDVLVQ (205 aa)). 176–231 (KNLLGLPVFVKPARGGSSIGISRVTAWEDFNKAVGLARAHDEKVIVESEIVGSEVE) contributes to the ATP binding site. 3 residues coordinate Mg(2+): aspartate 308, glutamate 320, and asparagine 322.

This sequence belongs to the D-alanine--D-alanine ligase family. Requires Mg(2+) as cofactor. The cofactor is Mn(2+).

It localises to the cytoplasm. The enzyme catalyses 2 D-alanine + ATP = D-alanyl-D-alanine + ADP + phosphate + H(+). It participates in cell wall biogenesis; peptidoglycan biosynthesis. In terms of biological role, cell wall formation. In Corynebacterium glutamicum (strain ATCC 13032 / DSM 20300 / JCM 1318 / BCRC 11384 / CCUG 27702 / LMG 3730 / NBRC 12168 / NCIMB 10025 / NRRL B-2784 / 534), this protein is D-alanine--D-alanine ligase.